The primary structure comprises 311 residues: Putative dihydroorotate dehydrogenase A (fumarate) (311 aa).

Substrate is bound by residues lysine 45, 69-73 (NSMGL), and asparagine 128. An FMN-binding site is contributed by 45 to 46 (KT). Position 128 (asparagine 128) interacts with FMN. Cysteine 131 functions as the Nucleophile in the catalytic mechanism. 2 residues coordinate FMN: lysine 165 and valine 193. Substrate is bound at residue 194-195 (NS). Residues glycine 220, 248-249 (GG), and 270-271 (GT) contribute to the FMN site.

It belongs to the dihydroorotate dehydrogenase family. Type 1 subfamily. In terms of assembly, homodimer. FMN serves as cofactor.

The protein resides in the cytoplasm. It catalyses the reaction (S)-dihydroorotate + fumarate = orotate + succinate. The protein operates within pyrimidine metabolism; UMP biosynthesis via de novo pathway. Functionally, catalyzes the conversion of dihydroorotate to orotate with fumarate as the electron acceptor. This Streptococcus uberis (strain ATCC BAA-854 / 0140J) protein is Putative dihydroorotate dehydrogenase A (fumarate) (pyrD).